A 217-amino-acid chain; its full sequence is tRNA (guanine-N(7)-)-methyltransferase (217 aa).

S-adenosyl-L-methionine contacts are provided by Glu-45, Glu-70, Asp-97, and Asp-119. The active site involves Asp-119. Lys-123 is a substrate binding site. Positions 125-130 are interaction with RNA; the sequence is RHEKRR. Substrate contacts are provided by residues Asp-155 and 195-198; that span reads TEYE.

It belongs to the class I-like SAM-binding methyltransferase superfamily. TrmB family.

It catalyses the reaction guanosine(46) in tRNA + S-adenosyl-L-methionine = N(7)-methylguanosine(46) in tRNA + S-adenosyl-L-homocysteine. It participates in tRNA modification; N(7)-methylguanine-tRNA biosynthesis. Its function is as follows. Catalyzes the formation of N(7)-methylguanine at position 46 (m7G46) in tRNA. The polypeptide is tRNA (guanine-N(7)-)-methyltransferase (Lactobacillus helveticus (strain DPC 4571)).